A 348-amino-acid chain; its full sequence is Protein RecA (348 aa).

66–73 (GPESSGKT) is a binding site for ATP.

It belongs to the RecA family.

It is found in the cytoplasm. Can catalyze the hydrolysis of ATP in the presence of single-stranded DNA, the ATP-dependent uptake of single-stranded DNA by duplex DNA, and the ATP-dependent hybridization of homologous single-stranded DNAs. It interacts with LexA causing its activation and leading to its autocatalytic cleavage. In Legionella pneumophila (strain Lens), this protein is Protein RecA.